The primary structure comprises 375 residues: Glutamate 5-kinase (375 aa).

ATP is bound at residue lysine 17. Substrate-binding residues include serine 57, aspartate 144, and asparagine 158. An ATP-binding site is contributed by 178–179 (TD). Residues 284-360 (SGSIVVDTGA…NEIADILGYK (77 aa)) form the PUA domain.

It belongs to the glutamate 5-kinase family.

It is found in the cytoplasm. It carries out the reaction L-glutamate + ATP = L-glutamyl 5-phosphate + ADP. The protein operates within amino-acid biosynthesis; L-proline biosynthesis; L-glutamate 5-semialdehyde from L-glutamate: step 1/2. Its function is as follows. Catalyzes the transfer of a phosphate group to glutamate to form L-glutamate 5-phosphate. This Methanococcoides burtonii (strain DSM 6242 / NBRC 107633 / OCM 468 / ACE-M) protein is Glutamate 5-kinase.